The following is a 284-amino-acid chain: 4-diphosphocytidyl-2-C-methyl-D-erythritol kinase (284 aa).

The active site involves Lys10. Residue 95-105 coordinates ATP; the sequence is PVAAGLGGGSS. The active site involves Asp137.

The protein belongs to the GHMP kinase family. IspE subfamily.

It carries out the reaction 4-CDP-2-C-methyl-D-erythritol + ATP = 4-CDP-2-C-methyl-D-erythritol 2-phosphate + ADP + H(+). It participates in isoprenoid biosynthesis; isopentenyl diphosphate biosynthesis via DXP pathway; isopentenyl diphosphate from 1-deoxy-D-xylulose 5-phosphate: step 3/6. Functionally, catalyzes the phosphorylation of the position 2 hydroxy group of 4-diphosphocytidyl-2C-methyl-D-erythritol. The chain is 4-diphosphocytidyl-2-C-methyl-D-erythritol kinase from Levilactobacillus brevis (strain ATCC 367 / BCRC 12310 / CIP 105137 / JCM 1170 / LMG 11437 / NCIMB 947 / NCTC 947) (Lactobacillus brevis).